The chain runs to 264 residues: ATP synthase subunit a (264 aa).

The next 5 helical transmembrane spans lie at 39 to 59 (LDTL…FYIV), 97 to 117 (VAPL…MDLV), 139 to 159 (TADP…VIFY), 205 to 225 (LFGN…LPWW), and 239 to 259 (LLVI…YISL).

This sequence belongs to the ATPase A chain family. In terms of assembly, F-type ATPases have 2 components, CF(1) - the catalytic core - and CF(0) - the membrane proton channel. CF(1) has five subunits: alpha(3), beta(3), gamma(1), delta(1), epsilon(1). CF(0) has three main subunits: a(1), b(2) and c(9-12). The alpha and beta chains form an alternating ring which encloses part of the gamma chain. CF(1) is attached to CF(0) by a central stalk formed by the gamma and epsilon chains, while a peripheral stalk is formed by the delta and b chains.

It is found in the cell inner membrane. Functionally, key component of the proton channel; it plays a direct role in the translocation of protons across the membrane. The sequence is that of ATP synthase subunit a from Coxiella burnetii (strain RSA 331 / Henzerling II).